The primary structure comprises 336 residues: Protein-lysine N-methyltransferase EFM3 (336 aa).

S-adenosyl-L-methionine contacts are provided by residues tryptophan 147, 173–175 (GTG), aspartate 196, leucine 232, and alanine 251.

Belongs to the class I-like SAM-binding methyltransferase superfamily. EEF2KMT family.

The protein localises to the cytoplasm. Its function is as follows. S-adenosyl-L-methionine-dependent protein-lysine N-methyltransferase that methylates elongation factor 2. This Chaetomium thermophilum (strain DSM 1495 / CBS 144.50 / IMI 039719) (Thermochaetoides thermophila) protein is Protein-lysine N-methyltransferase EFM3.